Reading from the N-terminus, the 356-residue chain is MWGFIVTCGIFLVLLCQLRLLSKRKSKSTPYNALLPNVTVFAMGGTIAGCANSSLEIVNYIPGSVGIEKLIEAVPAIKAIANINGVQVTNMGSENLTPADVLKLAKLILAEVAKPNVHGIVITHGTDSLEETAMFLDLTISTAKPIVVVGAMRPSTAIGADGPMNLLNAVAVASSNQSMGRGTLVLLNDRIGSAFYTTKTNGNTLDTFKSYEAGSLGIVLNQKPFYFFSPAVPTGKVFFDIYNIKQLPRVDILYGYQGLNPKLAESAVHLGAKGLVLAAMGATSWTDDGNEVISSLIREHNIPVVYSHRTAEGYSSNSCLGIPSYFLNPQKARYMLMLAISSGYSIRDIEGLFSIK.

The N-terminal stretch at 1–22 is a signal peptide; that stretch reads MWGFIVTCGIFLVLLCQLRLLS. Residues 36–356 form the Asparaginase/glutaminase domain; the sequence is PNVTVFAMGG…RDIEGLFSIK (321 aa). Asn-37 carries an N-linked (GlcNAc...) asparagine glycan. The O-isoaspartyl threonine intermediate role is filled by Thr-46. A glycan (N-linked (GlcNAc...) asparagine) is linked at Asn-52. Residues Ser-93 and 126 to 127 each bind substrate; that span reads TD. An N-linked (GlcNAc...) asparagine glycan is attached at Asn-176.

This sequence belongs to the asparaginase 1 family.

It is found in the secreted. The protein resides in the cell wall. The catalysed reaction is L-asparagine + H2O = L-aspartate + NH4(+). In Schizosaccharomyces pombe (strain 972 / ATCC 24843) (Fission yeast), this protein is Probable L-asparaginase 4.